Consider the following 109-residue polypeptide: MSSKAKKRVVLPTRPAPPTVEQILEDVRGAPAQDPVFTALAPEDPLEPLPRAEDSEVQQEQIYQQSRTYVAMNERLRQAGDALRQKFDGLRQAGQRLEQDISQVTSATS.

Y63 carries the post-translational modification Phosphotyrosine.

It belongs to the UPF0449 family.

This chain is UPF0449 protein C19orf25 homolog, found in Rattus norvegicus (Rat).